The chain runs to 420 residues: DNA primase small subunit (420 aa).

Methionine 1 is subject to N-acetylmethionine. Catalysis depends on residues glutamate 44, aspartate 109, and aspartate 111. 2 residues coordinate Mg(2+): aspartate 109 and aspartate 111. Residues aspartate 109 and aspartate 111 each coordinate Mn(2+). 109–111 is a binding site for a ribonucleoside 5'-triphosphate; that stretch reads DID. Zn(2+)-binding residues include cysteine 121, cysteine 122, cysteine 128, and cysteine 131. The Zinc knuckle motif motif lies at 121–131; sequence CCSSADICPKC. 160–166 contributes to the a ribonucleoside 5'-triphosphate binding site; it reads SGRRGVH. Aspartate 306 lines the Mg(2+) pocket. Aspartate 306 lines the Mn(2+) pocket. A ribonucleoside 5'-triphosphate-binding positions include 315–318 and histidine 324; that span reads HLLK. Residues 363–373 are compositionally biased toward acidic residues; it reads NEEEKEENEAE. The tract at residues 363-382 is disordered; sequence NEEEKEENEAESDVKHRTRD.

This sequence belongs to the eukaryotic-type primase small subunit family. As to quaternary structure, heterodimer of a catalytic subunit PRIM1 and a regulatory subunit PRIM2, also known as the DNA primase complex. Interacts with PRIM2 (via C-terminus). Component of the alpha DNA polymerase complex (also known as the alpha DNA polymerase-primase complex) consisting of four subunits: the catalytic subunit POLA1, the regulatory subunit POLA2, and the primase complex subunits PRIM1 and PRIM2 respectively. Within the complex, POLA1 directly interacts with PRIM2. It depends on Mg(2+) as a cofactor. Mn(2+) is required as a cofactor.

It carries out the reaction ssDNA + n NTP = ssDNA/pppN(pN)n-1 hybrid + (n-1) diphosphate.. Its activity is regulated as follows. The presence of the regulatory subunit PRIM2/p58 accelerates the kinetics of initiation and primer extension. Inhibited by arabinose nucleoside derivatives such as fludarabine and vidarabine. In terms of biological role, catalytic subunit of the DNA primase complex and component of the DNA polymerase alpha complex (also known as the alpha DNA polymerase-primase complex - primosome/replisome) which play an essential role in the initiation of DNA synthesis. During the S phase of the cell cycle, the DNA polymerase alpha complex (composed of a catalytic subunit POLA1, an accessory subunit POLA2 and two primase subunits, the catalytic subunit PRIM1 and the regulatory subunit PRIM2) is recruited to DNA at the replicative forks via direct interactions with MCM10 and WDHD1. The primase subunit of the polymerase alpha complex initiates DNA synthesis by oligomerising short RNA primers on both leading and lagging strands. These primers are initially extended by the polymerase alpha catalytic subunit and subsequently transferred to polymerase delta and polymerase epsilon for processive synthesis on the lagging and leading strand, respectively. In the primase complex, both subunits are necessary for the initial di-nucleotide formation, but the extension of the primer depends only on the catalytic subunit. Synthesizes 9-mer RNA primers (also known as the 'unit length' RNA primers). Incorporates only ribonucleotides in the presence of ribo- and deoxy-nucleotide triphosphates (rNTPs, dNTPs). Requires template thymine or cytidine to start the RNA primer synthesis, with an adenine or guanine at its 5'-end. Binds single stranded DNA. The chain is DNA primase small subunit (PRIM1) from Homo sapiens (Human).